The following is a 352-amino-acid chain: PhoH-like protein (352 aa).

Residues M1–V21 form a disordered region. A compositionally biased stretch (low complexity) spans A9–Q20. G150–T157 is a binding site for ATP.

This sequence belongs to the PhoH family.

It is found in the cytoplasm. The protein is PhoH-like protein of Mycobacterium bovis (strain ATCC BAA-935 / AF2122/97).